Here is a 122-residue protein sequence, read N- to C-terminus: Large ribosomal subunit protein uL14 (122 aa).

This sequence belongs to the universal ribosomal protein uL14 family. In terms of assembly, part of the 50S ribosomal subunit. Forms a cluster with proteins L3 and L19. In the 70S ribosome, L14 and L19 interact and together make contacts with the 16S rRNA in bridges B5 and B8.

In terms of biological role, binds to 23S rRNA. Forms part of two intersubunit bridges in the 70S ribosome. This is Large ribosomal subunit protein uL14 from Borrelia hermsii (strain HS1 / DAH).